Consider the following 364-residue polypeptide: GDSL esterase/lipase 7 (364 aa).

The N-terminal stretch at 1-19 (MKSLLICLVLLELVWLGNG) is a signal peptide. The active-site Nucleophile is Ser37. 3 N-linked (GlcNAc...) asparagine glycosylation sites follow: Asn236, Asn237, and Asn264. Residues Asp329 and His332 contribute to the active site. Asn351 is a glycosylation site (N-linked (GlcNAc...) asparagine).

This sequence belongs to the 'GDSL' lipolytic enzyme family.

It is found in the secreted. The protein is GDSL esterase/lipase 7 (GLIP7) of Arabidopsis thaliana (Mouse-ear cress).